The sequence spans 354 residues: Uroporphyrinogen decarboxylase (354 aa).

Substrate-binding positions include 27–31 (RQAGR), Asp-77, Tyr-154, Ser-209, and His-327.

The protein belongs to the uroporphyrinogen decarboxylase family. As to quaternary structure, homodimer.

The protein localises to the cytoplasm. The catalysed reaction is uroporphyrinogen III + 4 H(+) = coproporphyrinogen III + 4 CO2. Its pathway is porphyrin-containing compound metabolism; protoporphyrin-IX biosynthesis; coproporphyrinogen-III from 5-aminolevulinate: step 4/4. Its function is as follows. Catalyzes the decarboxylation of four acetate groups of uroporphyrinogen-III to yield coproporphyrinogen-III. This chain is Uroporphyrinogen decarboxylase, found in Saccharophagus degradans (strain 2-40 / ATCC 43961 / DSM 17024).